A 760-amino-acid polypeptide reads, in one-letter code: Anti-sigma-I factor RsgI6 (760 aa).

Topologically, residues 1–55 are cytoplasmic; sequence MIVGKVLDMDEKTAIIMTDDFAFLNVVRTSEMAVGKKVKVLDSDIIKPKNSLRRY. Residues 2–49 form the RsgI N-terminal anti-sigma domain; the sequence is IVGKVLDMDEKTAIIMTDDFAFLNVVRTSEMAVGKKVKVLDSDIIKPK. The helical transmembrane segment at 56 to 76 threads the bilayer; it reads LPVAAVAACFVIVLSFVLMFI. Residues 77–760 are Extracellular-facing; that stretch reads NGNTARKNIY…GTLQTTYRIP (684 aa). The segment at 274-352 is disordered; the sequence is AINTGPAESA…STPKPVSPVQ (79 aa). Over residues 291-352 the composition is skewed to polar residues; the sequence is LPATSTPGRT…STPKPVSPVQ (62 aa). The 300-residue stretch at 402-701 folds into the GH10 domain; that stretch reads DSSNKPIENA…NEAGRRFESL (300 aa). E538 (proton donor) is an active-site residue. The Nucleophile role is filled by E635.

It in the C-terminal section; belongs to the glycosyl hydrolase 10 (cellulase F) family. Interacts (via RsgI N-terminal anti-sigma domain) with SigI6.

Its subcellular location is the cell membrane. It carries out the reaction Endohydrolysis of (1-&gt;4)-beta-D-xylosidic linkages in xylans.. It functions in the pathway glycan degradation; xylan degradation. In terms of biological role, anti-sigma factor for SigI6. Negatively regulates SigI6 activity through direct interaction. Binding of the polysaccharide substrate to the extracellular C-terminal sensing domain of RsgI6 may induce a conformational change in its N-terminal cytoplasmic region, leading to the release and activation of SigI6. Binds to and hydrolyzes insoluble and soluble xylan substrates. Has low enzymatic activity. The polypeptide is Anti-sigma-I factor RsgI6 (Acetivibrio thermocellus (strain ATCC 27405 / DSM 1237 / JCM 9322 / NBRC 103400 / NCIMB 10682 / NRRL B-4536 / VPI 7372) (Clostridium thermocellum)).